The chain runs to 224 residues: Cytidylate kinase (224 aa).

11–19 (GPAAAGKST) lines the ATP pocket.

It belongs to the cytidylate kinase family. Type 1 subfamily.

Its subcellular location is the cytoplasm. It carries out the reaction CMP + ATP = CDP + ADP. The catalysed reaction is dCMP + ATP = dCDP + ADP. This is Cytidylate kinase from Listeria monocytogenes serotype 4a (strain HCC23).